We begin with the raw amino-acid sequence, 278 residues long: Elongation factor Ts (278 aa).

The segment at 82 to 85 (TDFV) is involved in Mg(2+) ion dislocation from EF-Tu.

Belongs to the EF-Ts family.

It is found in the cytoplasm. In terms of biological role, associates with the EF-Tu.GDP complex and induces the exchange of GDP to GTP. It remains bound to the aminoacyl-tRNA.EF-Tu.GTP complex up to the GTP hydrolysis stage on the ribosome. The protein is Elongation factor Ts (tsf) of Streptomyces ramocissimus.